A 226-amino-acid polypeptide reads, in one-letter code: Small ribosomal subunit protein uS2c (226 aa).

The protein belongs to the universal ribosomal protein uS2 family.

Its subcellular location is the plastid. It localises to the chloroplast. The protein is Small ribosomal subunit protein uS2c (rps2) of Ostreococcus tauri.